A 212-amino-acid polypeptide reads, in one-letter code: Large ribosomal subunit protein uL3 (212 aa).

Belongs to the universal ribosomal protein uL3 family. As to quaternary structure, part of the 50S ribosomal subunit. Forms a cluster with proteins L14 and L19.

Its function is as follows. One of the primary rRNA binding proteins, it binds directly near the 3'-end of the 23S rRNA, where it nucleates assembly of the 50S subunit. This Acetivibrio thermocellus (strain ATCC 27405 / DSM 1237 / JCM 9322 / NBRC 103400 / NCIMB 10682 / NRRL B-4536 / VPI 7372) (Clostridium thermocellum) protein is Large ribosomal subunit protein uL3.